Here is a 435-residue protein sequence, read N- to C-terminus: Glutamyl-tRNA reductase (435 aa).

Residues 49–52 (TCNR), Ser109, 114–116 (ETQ), and Gln120 each bind substrate. Cys50 serves as the catalytic Nucleophile. 189–194 (GAGEMS) lines the NADP(+) pocket.

It belongs to the glutamyl-tRNA reductase family. In terms of assembly, homodimer.

The enzyme catalyses (S)-4-amino-5-oxopentanoate + tRNA(Glu) + NADP(+) = L-glutamyl-tRNA(Glu) + NADPH + H(+). It participates in porphyrin-containing compound metabolism; protoporphyrin-IX biosynthesis; 5-aminolevulinate from L-glutamyl-tRNA(Glu): step 1/2. Its function is as follows. Catalyzes the NADPH-dependent reduction of glutamyl-tRNA(Glu) to glutamate 1-semialdehyde (GSA). This Listeria monocytogenes serovar 1/2a (strain ATCC BAA-679 / EGD-e) protein is Glutamyl-tRNA reductase.